The primary structure comprises 653 residues: Zinc finger protein 59 (653 aa).

The KRAB domain maps to 14-86; the sequence is VTFRDVAVDF…VNEETGRPSP (73 aa). 16 consecutive C2H2-type zinc fingers follow at residues 172 to 194, 200 to 222, 256 to 278, 284 to 306, 312 to 334, 340 to 362, 368 to 390, 396 to 418, 424 to 446, 452 to 474, 480 to 502, 508 to 530, 536 to 558, 564 to 586, 592 to 614, and 620 to 642; these read YECKECGKCFGCRSTLTQHQSVH, YECKECGKAFRLPQQLTRHQKCH, FACRECGKSFNRVSSLVEHGLIH, YECNECGKAFKRHRSFVRHQKIH, FQCKDCGKGFIVLAHLTRHQSSH, FECEECGKKFRTARHLVKHQRIH, FECNVCGSAFRLQLYLSEHQKTH, LECNVCGKAFRLQVYLSEHLKTH, FKCKLCGSAFPNKYQLNKHLTVH, YQCKECGKCFRQRSKLTEHESIH, FQCEECGKFFRLNTLLIHHQKSH, FECKECGKAFLLPSQLNSHKIVH, FECKVCGKSFKRESNLIQHGAVH, YECSECGKGFIHRSSLFHHRKIH, FKCQECGKAFVVLAYLIQHQSIH, and FECELCGSAFRCRSQLNKHLRIH.

Belongs to the krueppel C2H2-type zinc-finger protein family. As to expression, expressed predominantly in the testis (at protein level).

Its subcellular location is the nucleus. Its function is as follows. May have a role during differentiation processes. In Mus musculus (Mouse), this protein is Zinc finger protein 59 (Zfp59).